The following is a 467-amino-acid chain: Light-independent protochlorophyllide reductase subunit N (467 aa).

3 residues coordinate [4Fe-4S] cluster: Cys22, Cys47, and Cys107.

This sequence belongs to the BchN/ChlN family. As to quaternary structure, protochlorophyllide reductase is composed of three subunits; ChlL, ChlN and ChlB. Forms a heterotetramer of two ChlB and two ChlN subunits. It depends on [4Fe-4S] cluster as a cofactor.

It is found in the plastid. The protein localises to the chloroplast. The catalysed reaction is chlorophyllide a + oxidized 2[4Fe-4S]-[ferredoxin] + 2 ADP + 2 phosphate = protochlorophyllide a + reduced 2[4Fe-4S]-[ferredoxin] + 2 ATP + 2 H2O. Its pathway is porphyrin-containing compound metabolism; chlorophyll biosynthesis (light-independent). In terms of biological role, component of the dark-operative protochlorophyllide reductase (DPOR) that uses Mg-ATP and reduced ferredoxin to reduce ring D of protochlorophyllide (Pchlide) to form chlorophyllide a (Chlide). This reaction is light-independent. The NB-protein (ChlN-ChlB) is the catalytic component of the complex. The sequence is that of Light-independent protochlorophyllide reductase subunit N from Pinus thunbergii (Japanese black pine).